The chain runs to 192 residues: VQ motif-containing protein 22 (192 aa).

Residues 24 to 38 (ASTAVTTTTAGDTTS) are compositionally biased toward low complexity. Residues 24–65 (ASTAVTTTTAGDTTSIDSRLSPETGRVTKPTRRRSRASRRTP) form a disordered region. The segment covering 52–62 (KPTRRRSRASR) has biased composition (basic residues). A VQ motif is present at residues 76–85 (FRAMVQQYTG). Disordered regions lie at residues 101–135 (FSLT…PQRP) and 163–192 (FGTV…SRLQ). Low complexity-rich tracts occupy residues 102–114 (SLTS…AGSS) and 175–192 (APSS…SRLQ).

It localises to the nucleus. Its function is as follows. May function as positive regulator of plant growth. This chain is VQ motif-containing protein 22, found in Arabidopsis thaliana (Mouse-ear cress).